A 339-amino-acid polypeptide reads, in one-letter code: DNA-directed RNA polymerase subunit alpha (339 aa).

The interval 1-233 (MVREEVAGST…DLFLPFLHAE (233 aa)) is alpha N-terminal domain (alpha-NTD). An alpha C-terminal domain (alpha-CTD) region spans residues 264–339 (KKGIPLNCIF…IDLLKNKLSF (76 aa)).

Belongs to the RNA polymerase alpha chain family. In plastids the minimal PEP RNA polymerase catalytic core is composed of four subunits: alpha, beta, beta', and beta''. When a (nuclear-encoded) sigma factor is associated with the core the holoenzyme is formed, which can initiate transcription.

Its subcellular location is the plastid. It localises to the chloroplast. The enzyme catalyses RNA(n) + a ribonucleoside 5'-triphosphate = RNA(n+1) + diphosphate. Its function is as follows. DNA-dependent RNA polymerase catalyzes the transcription of DNA into RNA using the four ribonucleoside triphosphates as substrates. In Psathyrostachys stoloniformis, this protein is DNA-directed RNA polymerase subunit alpha.